Reading from the N-terminus, the 216-residue chain is Nucleoid occlusion factor SlmA (216 aa).

The segment at 1 to 23 is disordered; sequence MAEQLTLDSIEPEPEKQSAKIEK. The span at 13–23 shows a compositional bias: basic and acidic residues; sequence EPEKQSAKIEK. The region spanning 28-88 is the HTH tetR-type domain; it reads ERRQQVLTVL…ALIENIESSL (61 aa). The H-T-H motif DNA-binding region spans 51–70; sequence TTARLAKEVGVSEAALYRYF.

Belongs to the nucleoid occlusion factor SlmA family. Homodimer. Interacts with FtsZ.

The protein localises to the cytoplasm. The protein resides in the nucleoid. In terms of biological role, required for nucleoid occlusion (NO) phenomenon, which prevents Z-ring formation and cell division over the nucleoid. Acts as a DNA-associated cell division inhibitor that binds simultaneously chromosomal DNA and FtsZ, and disrupts the assembly of FtsZ polymers. SlmA-DNA-binding sequences (SBS) are dispersed on non-Ter regions of the chromosome, preventing FtsZ polymerization at these regions. In Mannheimia succiniciproducens (strain KCTC 0769BP / MBEL55E), this protein is Nucleoid occlusion factor SlmA.